We begin with the raw amino-acid sequence, 550 residues long: Hydroxylamine reductase (550 aa).

4 residues coordinate [4Fe-4S] cluster: Cys7, Cys10, Cys19, and Cys25. Hybrid [4Fe-2O-2S] cluster is bound by residues His244, Glu268, Cys312, Cys405, Cys433, Cys458, Glu493, and Lys495. Cys405 carries the post-translational modification Cysteine persulfide.

It belongs to the HCP family. It depends on [4Fe-4S] cluster as a cofactor. Hybrid [4Fe-2O-2S] cluster serves as cofactor.

It is found in the cytoplasm. The enzyme catalyses A + NH4(+) + H2O = hydroxylamine + AH2 + H(+). Functionally, catalyzes the reduction of hydroxylamine to form NH(3) and H(2)O. The protein is Hydroxylamine reductase of Porphyromonas gingivalis (strain ATCC BAA-308 / W83).